The following is a 323-amino-acid chain: Galectin-4 (323 aa).

2 Galectin domains span residues Tyr-19–Ile-150 and Tyr-194–Ile-323. Trp-256 to Lys-262 contributes to the a beta-D-galactoside binding site. The residue at position 258 (Ser-258) is a Phosphoserine.

As to quaternary structure, monomer.

Galectin that binds lactose and a related range of sugars. May be involved in the assembly of adherens junctions. This chain is Galectin-4 (LGALS4), found in Homo sapiens (Human).